The chain runs to 272 residues: Putative G-protein coupled receptor GPR32P1 (272 aa).

A disordered region spans residues 1-24 (MNGVSEGTRGCSDRQPGALTQGHS). The Extracellular segment spans residues 1-46 (MNGVSEGTRGCSDRQPGALTQGHSCSRKMNASRCLSEEVGSLRPLT). Residue Asn-30 is glycosylated (N-linked (GlcNAc...) asparagine). A helical membrane pass occupies residues 47–67 (MAVLSASFVVGVLGNGLVPWV). Over 68-78 (TVFRMARTVST) the chain is Cytoplasmic. A helical transmembrane segment spans residues 79–99 (VCFFHLALADFMLSLSLPILV). Over 100–116 (YYIVSRQWLLGEWACKL) the chain is Extracellular. A disulfide bridge connects residues Cys-114 and Cys-191. Residues 117–137 (YTGFVFLTFSTSNCLLVLISV) traverse the membrane as a helical segment. Over 138 to 158 (DRCISVLYPVWALNHRTEQRA) the chain is Cytoplasmic. The helical transmembrane segment at 159 to 179 (SWLAFGVWLLAAALCSAHLKF) threads the bilayer. Residues 180-213 (RTTRKWNGCMQCYLQFNLENETAQMWTQEVFGRQ) lie on the Extracellular side of the membrane. Asn-199 carries an N-linked (GlcNAc...) asparagine glycan. Residues 214 to 234 (MAVIMAHFLLGFLGPLAIIGT) form a helical membrane-spanning segment. Residues 235-272 (CAHLIRAKLLREGWVHANRPKRLLLVLVSALSAGSHLT) are Cytoplasmic-facing.

The protein belongs to the G-protein coupled receptor 1 family.

It is found in the cell membrane. Functionally, orphan receptor. The chain is Putative G-protein coupled receptor GPR32P1 (GPR32P1) from Homo sapiens (Human).